We begin with the raw amino-acid sequence, 568 residues long: Urease subunit alpha (568 aa).

One can recognise a Urease domain in the interval 131-568; it reads GGIDTHIHFI…LPMAQRYFLF (438 aa). Ni(2+) contacts are provided by H136, H138, and K219. K219 carries the post-translational modification N6-carboxylysine. Substrate is bound at residue H221. Positions 248 and 274 each coordinate Ni(2+). H322 functions as the Proton donor in the catalytic mechanism. D362 lines the Ni(2+) pocket.

The protein belongs to the metallo-dependent hydrolases superfamily. Urease alpha subunit family. In terms of assembly, heterotrimer of UreA (gamma), UreB (beta) and UreC (alpha) subunits. Three heterotrimers associate to form the active enzyme. Ni cation serves as cofactor. Carboxylation allows a single lysine to coordinate two nickel ions.

The protein localises to the cytoplasm. The enzyme catalyses urea + 2 H2O + H(+) = hydrogencarbonate + 2 NH4(+). The protein operates within nitrogen metabolism; urea degradation; CO(2) and NH(3) from urea (urease route): step 1/1. The protein is Urease subunit alpha of Nostoc sp. (strain PCC 7120 / SAG 25.82 / UTEX 2576).